The chain runs to 565 residues: Probable alpha-L-arabinofuranosidase A (565 aa).

A signal peptide spans 1–19 (MPLSAAIKSSLSVSVRADA). N-linked (GlcNAc...) asparagine glycans are attached at residues N71, N91, N128, N303, N362, N486, and N501.

Belongs to the glycosyl hydrolase 51 family.

It is found in the secreted. It carries out the reaction Hydrolysis of terminal non-reducing alpha-L-arabinofuranoside residues in alpha-L-arabinosides.. Its pathway is glycan metabolism; L-arabinan degradation. Functionally, alpha-L-arabinofuranosidase involved in the degradation of arabinoxylan, a major component of plant hemicellulose. Acts only on small linear 1,5-alpha-linked L-arabinofuranosyl oligosaccharides. The sequence is that of Probable alpha-L-arabinofuranosidase A (abfA) from Emericella nidulans (strain FGSC A4 / ATCC 38163 / CBS 112.46 / NRRL 194 / M139) (Aspergillus nidulans).